Consider the following 327-residue polypeptide: Asnovolin J 5',6'-dehydrogenase nvfM (327 aa).

Residues 9–29 traverse the membrane as a helical segment; sequence VAIVGASGVTGGSIVNGLLAL. NADP(+) is bound by residues 13 to 19 and Lys47; that span reads GASGVTG. Catalysis depends on Lys130, which acts as the Proton acceptor.

Belongs to the NmrA-type oxidoreductase family.

Its subcellular location is the membrane. It catalyses the reaction asnovolin K + AH2 = asnovolin A + A. The catalysed reaction is chermesin D methyl ester + AH2 = asnovolin J + A. It functions in the pathway secondary metabolite biosynthesis; terpenoid biosynthesis. Asnovolin J 5',6'-dehydrogenase; part of the gene cluster that mediates the biosynthesis of novofumigatonin, a heavily oxygenated meroterpenoid containing a unique orthoester moiety. The first step of the pathway is the synthesis of 3,5-dimethylorsellinic acid (DMOA) by the polyketide synthase nvfA via condensation of one acetyl-CoA starter unit with 3 malonyl-CoA units and 2 methylations. DMOA is then converted to farnesyl-DMOA by the farnesyltransferase nvfB. Epoxydation by FAD-dependent monooxygenase nvfK, followed by a protonation-initiated cyclization catalyzed by the terpene cyclase nvfL leads to the production of asnavolin H. The short chain dehydrogenase nvfC then as a 3-OH dehydrogenase of asnovolin H to yield chemesin D. There are two branches to synthesize asnovolin A from chemesin D. In one branch, chemesin D undergoes Baeyer-Villiger oxidation by nvfH, methylation by nvfJ, and enoyl reduction by the nvfM D enoylreductase that reduces the double bond between C-5'and C-6', to form respectively asnovolin I, asnovolin K, and asnovolin A. In the other branch, the methylation precedes the Baeyer-Villiger oxidation and the enoyl reduction to yield asnovolin A via the asnovolin J intermediate. Asnovolin A is further converted to fumigatonoid A by the Fe(II)/2-oxoglutarate-dependent dioxygenase nvfI that catalyzes an endoperoxidation reaction. The alpha/beta hydrolase nvfD then acts as an epimerase that converts fumigatonoid A to its C-5' epimer, which then undergoes spontaneous or nvfD-catalyzed lactonization. The following step utilizes the ketoreductase nvfG to produce fumigatonoid B. The dioxygenase nvfE further converts fumigatonoid B into fumigatonoid C. Finally the Fe(II)/2-oxoglutarate-dependent dioxygenase nvfF catalyzes two rounds of oxidation to transform fumigatonoid C into the end product, novofumigatonin A. In Aspergillus novofumigatus (strain IBT 16806), this protein is Asnovolin J 5',6'-dehydrogenase nvfM.